A 634-amino-acid chain; its full sequence is Chaperone protein HtpG (634 aa).

The interval 1–342 (MTVETQKETL…SNDLSLNVSR (342 aa)) is a; substrate-binding. Positions 343–559 (EILQKDPIID…EQDLGLQMRQ (217 aa)) are b. Residues 560–634 (ILEASGQKVP…LNKLLVELSA (75 aa)) are c.

Belongs to the heat shock protein 90 family. Homodimer.

Its subcellular location is the cytoplasm. Functionally, molecular chaperone. Has ATPase activity. This is Chaperone protein HtpG from Pseudomonas putida (strain ATCC 47054 / DSM 6125 / CFBP 8728 / NCIMB 11950 / KT2440).